The chain runs to 439 residues: Microfibrillar-associated protein 1 (439 aa).

Disordered stretches follow at residues 1-27 (MSVPSALMKQPPIQSTAGAVPVRNEKG) and 39-200 (YVSG…PRLK). The residue at position 2 (Ser2) is an N-acetylserine. Ser52 and Ser53 each carry phosphoserine. Over residues 61 to 70 (QFIKKAKEQE) the composition is skewed to basic and acidic residues. Residue Lys67 forms a Glycyl lysine isopeptide (Lys-Gly) (interchain with G-Cter in SUMO2) linkage. Positions 71–81 (AEPEEQEEDSS) are enriched in acidic residues. Ser94, Ser116, Ser118, Ser132, and Ser133 each carry phosphoserine. Acidic residues-rich tracts occupy residues 112 to 122 (VVGESDSEVEG) and 131 to 144 (DSSEEEEEEIDDEE). Positions 145 to 163 (IERRRGMMRQRAQERKNEE) are enriched in basic and acidic residues. Positions 178–195 (ESESESEYEEYTDSEDEM) are enriched in acidic residues. Lys249 is covalently cross-linked (Glycyl lysine isopeptide (Lys-Gly) (interchain with G-Cter in SUMO2)). At Thr267 the chain carries Phosphothreonine. A Glycyl lysine isopeptide (Lys-Gly) (interchain with G-Cter in SUMO2) cross-link involves residue Lys357. Phosphoserine is present on Ser361. Residues Lys371, Lys381, Lys415, and Lys418 each participate in a glycyl lysine isopeptide (Lys-Gly) (interchain with G-Cter in SUMO2) cross-link. Ser432 bears the Phosphoserine mark.

This sequence belongs to the MFAP1 family. Component of the spliceosome B complex. Interacts with PRPF38A (via N-terminal interaction domain).

It localises to the nucleus. Its function is as follows. Involved in pre-mRNA splicing as a component of the spliceosome. The protein is Microfibrillar-associated protein 1 of Homo sapiens (Human).